We begin with the raw amino-acid sequence, 630 residues long: 1-deoxy-D-xylulose-5-phosphate synthase (630 aa).

Thiamine diphosphate contacts are provided by residues His74 and 115-117 (GHA). Asp146 contributes to the Mg(2+) binding site. Thiamine diphosphate-binding positions include 147-148 (AA), Asn175, Phe284, and Glu364. Asn175 lines the Mg(2+) pocket.

This sequence belongs to the transketolase family. DXPS subfamily. As to quaternary structure, homodimer. Mg(2+) serves as cofactor. Requires thiamine diphosphate as cofactor.

The catalysed reaction is D-glyceraldehyde 3-phosphate + pyruvate + H(+) = 1-deoxy-D-xylulose 5-phosphate + CO2. It participates in metabolic intermediate biosynthesis; 1-deoxy-D-xylulose 5-phosphate biosynthesis; 1-deoxy-D-xylulose 5-phosphate from D-glyceraldehyde 3-phosphate and pyruvate: step 1/1. Functionally, catalyzes the acyloin condensation reaction between C atoms 2 and 3 of pyruvate and glyceraldehyde 3-phosphate to yield 1-deoxy-D-xylulose-5-phosphate (DXP). This chain is 1-deoxy-D-xylulose-5-phosphate synthase, found in Methylacidiphilum infernorum (isolate V4) (Methylokorus infernorum (strain V4)).